The sequence spans 120 residues: Aspartate 1-decarboxylase (120 aa).

Serine 25 (schiff-base intermediate with substrate; via pyruvic acid) is an active-site residue. Residue serine 25 is modified to Pyruvic acid (Ser). Threonine 57 provides a ligand contact to substrate. Tyrosine 58 functions as the Proton donor in the catalytic mechanism. Residue 73-75 (GAA) coordinates substrate.

It belongs to the PanD family. As to quaternary structure, heterooctamer of four alpha and four beta subunits. Pyruvate serves as cofactor. In terms of processing, is synthesized initially as an inactive proenzyme, which is activated by self-cleavage at a specific serine bond to produce a beta-subunit with a hydroxyl group at its C-terminus and an alpha-subunit with a pyruvoyl group at its N-terminus.

It localises to the cytoplasm. The enzyme catalyses L-aspartate + H(+) = beta-alanine + CO2. It functions in the pathway cofactor biosynthesis; (R)-pantothenate biosynthesis; beta-alanine from L-aspartate: step 1/1. Functionally, catalyzes the pyruvoyl-dependent decarboxylation of aspartate to produce beta-alanine. In Deinococcus radiodurans (strain ATCC 13939 / DSM 20539 / JCM 16871 / CCUG 27074 / LMG 4051 / NBRC 15346 / NCIMB 9279 / VKM B-1422 / R1), this protein is Aspartate 1-decarboxylase.